The chain runs to 125 residues: Glycine cleavage system H protein (125 aa).

Positions serine 22–threonine 104 constitute a Lipoyl-binding domain. Position 63 is an N6-lipoyllysine (lysine 63).

It belongs to the GcvH family. The glycine cleavage system is composed of four proteins: P, T, L and H. (R)-lipoate is required as a cofactor.

In terms of biological role, the glycine cleavage system catalyzes the degradation of glycine. The H protein shuttles the methylamine group of glycine from the P protein to the T protein. Is also involved in protein lipoylation via its role as an octanoyl/lipoyl carrier protein intermediate. The chain is Glycine cleavage system H protein from Listeria welshimeri serovar 6b (strain ATCC 35897 / DSM 20650 / CCUG 15529 / CIP 8149 / NCTC 11857 / SLCC 5334 / V8).